Consider the following 163-residue polypeptide: N5-carboxyaminoimidazole ribonucleotide mutase (163 aa).

The substrate site is built by serine 11, aspartate 14, and arginine 41.

This sequence belongs to the AIR carboxylase family. Class I subfamily.

It carries out the reaction 5-carboxyamino-1-(5-phospho-D-ribosyl)imidazole + H(+) = 5-amino-1-(5-phospho-D-ribosyl)imidazole-4-carboxylate. The protein operates within purine metabolism; IMP biosynthesis via de novo pathway; 5-amino-1-(5-phospho-D-ribosyl)imidazole-4-carboxylate from 5-amino-1-(5-phospho-D-ribosyl)imidazole (N5-CAIR route): step 2/2. In terms of biological role, catalyzes the conversion of N5-carboxyaminoimidazole ribonucleotide (N5-CAIR) to 4-carboxy-5-aminoimidazole ribonucleotide (CAIR). The polypeptide is N5-carboxyaminoimidazole ribonucleotide mutase (Pseudomonas aeruginosa (strain ATCC 15692 / DSM 22644 / CIP 104116 / JCM 14847 / LMG 12228 / 1C / PRS 101 / PAO1)).